Here is a 776-residue protein sequence, read N- to C-terminus: MAAPGDPQDELLPLAGPGSQWLRHRGEGENEAVTPKGATPAPQAGEPSPGLGARAREAASREAGSGPARQSPVAMETASTGVAGVSSAMDHTFSTTSKDGEGSCYTSLISDICYPPQEDSTYFTGILQKENGHVTISESPEELGTPGPSLPDVPGIESRGLFSSDSGIEMTPAESTEVNKILADPLDQMKAEAYKYIDITRPEEVKHQEQHHPELEDKDLDFKNKDTDISIKPEGVREPDKPAPVEGKIIKDHLLEESTFAPYIDDLSEEQRRAPQITTPVKITLTEIEPSVETTTQEKTPEKQDICLKPSPDTVPTVTVSEPEDDSPGSITPPSSGTEPSAAESQGKGSISEDELITAIKEAKGLSYETAENPRPVGQLADRPEVKARSGPPTIPSPLDHEASSAESGDSEIELVSEDPMAAEDALPSGYVSFGHVGGPPPSPASPSIQYSILREEREAELDSELIIESCDASSASEESPKREQDSPPMKPSALDAIREETGVRAEERAPSRRGLAEPGSFLDYPSTEPQPGPELPPGDGALEPETPMLPRKPEEDSSSNQSPAATKGPGPLGPGAPPPLLFLNKQKAIDLLYWRDIKQTGIVFGSFLLLLFSLTQFSVVSVVAYLALAALSATISFRIYKSVLQAVQKTDEGHPFKAYLELEITLSQEQIQKYTDCLQFYVNSTLKELRRLFLVQDLVDSLKFAVLMWLLTYVGALFNGLTLLLMAVVSMFTLPVVYVKHQAQIDQYLGLVRTHINAVVAKIQAKIPGAKRHAE.

4 disordered regions span residues 1 to 101 (MAAP…KDGE), 137 to 168 (SESPEELGTPGPSLPDVPGIESRGLFSSDSGI), 205 to 245 (VKHQ…PAPV), and 285 to 580 (LTEI…APPP). Residue Ser-327 is modified to Phosphoserine. Low complexity predominate over residues 328–341 (PGSITPPSSGTEPS). Phosphoserine is present on residues Ser-350, Ser-352, and Ser-487. The span at 497 to 511 (AIREETGVRAEERAP) shows a compositional bias: basic and acidic residues. The Reticulon domain occupies 589-776 (AIDLLYWRDI…KIPGAKRHAE (188 aa)). A run of 2 helical transmembrane segments spans residues 603 to 623 (IVFGSFLLLLFSLTQFSVVSV) and 705 to 725 (FAVLMWLLTYVGALFNGLTLL).

As to quaternary structure, interacts with NDRG1. Interacts with BACE1. In terms of assembly, interacts with TMEM33. Interacts with UGCG; regulates the ceramide glucosyltransferase activity of UGCG. Isoforms RTN1-A and RTN1-B are phosphorylated. In terms of tissue distribution, expressed in neural and neuroendocrine tissues and cell cultures derived therefrom. Expression of isoform RTN1-C is strongly correlated with neuronal differentiation.

The protein localises to the endoplasmic reticulum membrane. The protein resides in the golgi apparatus membrane. Inhibits amyloid precursor protein processing, probably by blocking BACE1 activity. The sequence is that of Reticulon-1 (RTN1) from Homo sapiens (Human).